The chain runs to 1128 residues: Nck-associated protein 1 (1128 aa).

The interval 640–665 (AVNKKSKKQTGKKGEPEREKPGVESM) is disordered. A compositionally biased stretch (basic and acidic residues) spans 651–665 (KKGEPEREKPGVESM). The helical transmembrane segment at 995–1015 (IACLLMVFVAVSMPTLASNVM) threads the bilayer.

Belongs to the HEM-1/HEM-2 family.

It localises to the cell membrane. Its subcellular location is the cell projection. The protein localises to the lamellipodium membrane. In terms of biological role, part of the WAVE complex that regulates lamellipodia formation. The WAVE complex regulates actin filament reorganization via its interaction with the Arp2/3 complex. Actin remodeling activity is regulated by RAC1. Plays a role in neural tube closure. In Danio rerio (Zebrafish), this protein is Nck-associated protein 1 (nckap1).